Reading from the N-terminus, the 203-residue chain is Na(+)-translocating NADH-quinone reductase subunit E (203 aa).

Helical transmembrane passes span 12–32 (AVFVENMALAFFLGMCTFLAL), 36–56 (MEAAIGLGIAVVVVLSVTVPV), 82–102 (FLGLLTYIGVIAAIVQILEMV), 115–135 (GVFLPLITVNCAIMGASLFMV), 145–165 (LVYGFGAGLGWALAIIALAGI), and 181–201 (LGITFITVGLMSLGFMSFSGI).

The protein belongs to the NqrDE/RnfAE family. Composed of six subunits; NqrA, NqrB, NqrC, NqrD, NqrE and NqrF.

Its subcellular location is the cell inner membrane. The enzyme catalyses a ubiquinone + n Na(+)(in) + NADH + H(+) = a ubiquinol + n Na(+)(out) + NAD(+). Its function is as follows. NQR complex catalyzes the reduction of ubiquinone-1 to ubiquinol by two successive reactions, coupled with the transport of Na(+) ions from the cytoplasm to the periplasm. NqrA to NqrE are probably involved in the second step, the conversion of ubisemiquinone to ubiquinol. This chain is Na(+)-translocating NADH-quinone reductase subunit E, found in Hahella chejuensis (strain KCTC 2396).